The following is a 227-amino-acid chain: Sperm-associated antigen 7 (227 aa).

The tract at residues 1 to 45 (MADLLGSILSSMEKPPSLGDQESRRKAREQAARLKKLQEQDKQQK) is disordered. The residue at position 2 (alanine 2) is an N-acetylalanine. The span at 21–45 (QESRRKAREQAARLKKLQEQDKQQK) shows a compositional bias: basic and acidic residues. The Nuclear localization signal signature appears at 35 to 51 (KKLQEQDKQQKVEFRKR). The region spanning 46-109 (VEFRKRMEKE…DCRYVMIFKK (64 aa)) is the R3H domain. Serine 114 is subject to Phosphoserine. The tract at residues 118-161 (LDSYRHGEEWDPQKAEEKRKLKELAQKQEEEAAQQGPAVVSPAS) is disordered. Positions 119 to 147 (DSYRHGEEWDPQKAEEKRKLKELAQKQEE) are enriched in basic and acidic residues. The Nuclear localization signal motif lies at 122 to 139 (RHGEEWDPQKAEEKRKLK). Serine 158 and serine 202 each carry phosphoserine.

It is found in the nucleus. In Mus musculus (Mouse), this protein is Sperm-associated antigen 7 (Spag7).